A 657-amino-acid polypeptide reads, in one-letter code: Glycogen debranching enzyme (657 aa).

Asp336 functions as the Nucleophile in the catalytic mechanism. Residue Glu371 is the Proton donor of the active site. The segment covering 458–467 has biased composition (basic and acidic residues); it reads NEANGEENRD. The disordered stretch occupies residues 458-479; sequence NEANGEENRDGTNNNYSNNHGK.

Belongs to the glycosyl hydrolase 13 family.

The enzyme catalyses Hydrolysis of (1-&gt;6)-alpha-D-glucosidic linkages to branches with degrees of polymerization of three or four glucose residues in limit dextrin.. It participates in glycan degradation; glycogen degradation. Functionally, removes maltotriose and maltotetraose chains that are attached by 1,6-alpha-linkage to the limit dextrin main chain, generating a debranched limit dextrin. The polypeptide is Glycogen debranching enzyme (Escherichia coli (strain 55989 / EAEC)).